The sequence spans 537 residues: Protein swallow (537 aa).

Positions Gln-344 to Asp-406 are disordered. Low complexity-rich tracts occupy residues Asn-371–Ser-383 and Ala-392–Asp-406.

May be constituted of a homo- or heterodimer.

Its subcellular location is the nucleus. Functionally, has a role in localizing bicoid mRNA at the anterior margin of the oocyte during oogenesis, and a poorly characterized role in nuclear divisions in early embryogenesis. The protein is Protein swallow (swa) of Drosophila pseudoobscura pseudoobscura (Fruit fly).